A 147-amino-acid chain; its full sequence is Hemoglobin subunit epsilon (147 aa).

Residues H3–H147 enclose the Globin domain. Phosphoserine occurs at positions 14 and 51. Heme b-binding residues include H64 and H93.

This sequence belongs to the globin family. In terms of assembly, heterotetramer of two alpha chains and two epsilon chains in early embryonic hemoglobin Gower-2; two zeta chains and two epsilon chains in early embryonic hemoglobin Gower-1. Red blood cells.

The epsilon chain is a beta-type chain of early mammalian embryonic hemoglobin. This Alouatta belzebul (Red-handed howler monkey) protein is Hemoglobin subunit epsilon (HBE1).